A 366-amino-acid polypeptide reads, in one-letter code: Chorismate synthase (366 aa).

Arg-48 contributes to the NADP(+) binding site. FMN contacts are provided by residues 125 to 127, 241 to 242, Gly-285, 300 to 304, and Arg-326; these read RSS, NA, and KPTSS.

It belongs to the chorismate synthase family. As to quaternary structure, homotetramer. Requires FMNH2 as cofactor.

It catalyses the reaction 5-O-(1-carboxyvinyl)-3-phosphoshikimate = chorismate + phosphate. It functions in the pathway metabolic intermediate biosynthesis; chorismate biosynthesis; chorismate from D-erythrose 4-phosphate and phosphoenolpyruvate: step 7/7. Catalyzes the anti-1,4-elimination of the C-3 phosphate and the C-6 proR hydrogen from 5-enolpyruvylshikimate-3-phosphate (EPSP) to yield chorismate, which is the branch point compound that serves as the starting substrate for the three terminal pathways of aromatic amino acid biosynthesis. This reaction introduces a second double bond into the aromatic ring system. The polypeptide is Chorismate synthase (Roseobacter denitrificans (strain ATCC 33942 / OCh 114) (Erythrobacter sp. (strain OCh 114))).